Reading from the N-terminus, the 69-residue chain is Large ribosomal subunit protein uL30 (69 aa).

Belongs to the universal ribosomal protein uL30 family. As to quaternary structure, part of the 50S ribosomal subunit.

This chain is Large ribosomal subunit protein uL30, found in Rhizobium etli (strain CIAT 652).